Consider the following 326-residue polypeptide: Tetraacyldisaccharide 4'-kinase (326 aa).

52–59 (TLGGAGKT) serves as a coordination point for ATP.

This sequence belongs to the LpxK family.

The catalysed reaction is a lipid A disaccharide + ATP = a lipid IVA + ADP + H(+). It functions in the pathway glycolipid biosynthesis; lipid IV(A) biosynthesis; lipid IV(A) from (3R)-3-hydroxytetradecanoyl-[acyl-carrier-protein] and UDP-N-acetyl-alpha-D-glucosamine: step 6/6. Functionally, transfers the gamma-phosphate of ATP to the 4'-position of a tetraacyldisaccharide 1-phosphate intermediate (termed DS-1-P) to form tetraacyldisaccharide 1,4'-bis-phosphate (lipid IVA). This Methylobacterium radiotolerans (strain ATCC 27329 / DSM 1819 / JCM 2831 / NBRC 15690 / NCIMB 10815 / 0-1) protein is Tetraacyldisaccharide 4'-kinase.